Consider the following 314-residue polypeptide: Small glutamine-rich tetratricopeptide repeat-containing protein alpha (314 aa).

The interval 65–99 (ATASKEMPQDPRGPDRTPPSEEDSAEAERLKTEGN) is disordered. Residues 71–83 (MPQDPRGPDRTPP) are compositionally biased toward basic and acidic residues. Thr-81 is subject to Phosphothreonine. Ser-84 carries the post-translational modification Phosphoserine. A compositionally biased stretch (basic and acidic residues) spans 90–99 (EAERLKTEGN). TPR repeat units follow at residues 91–124 (AERL…NPAN), 125–158 (AVYF…DPGY), and 159–192 (SKAY…DPDN). Residue Lys-137 is modified to N6-acetyllysine. Residues 249–268 (GMISGGHNPLGTPGSSPQHS) form a disordered region. Phosphoserine is present on Ser-302. Thr-304 is subject to Phosphothreonine. Position 306 is a phosphoserine (Ser-306).

The protein belongs to the SGT family. Homodimer. Homooligomer. Interacts with DNAJC5 and DNAJC5B. Interacts (via TPR repeats) with HSP90AA1. Interacts (via Gln-rich region) with SLC2A1. Interacts with HSP90AB1. Interacts (via TPR repeats) with HSPA8/Hsc70; the interaction is direct. Interacts with BAG6 (via ubiquitin-like domain); interaction prevents interaction between BAG6 and RNF126. Forms a multiprotein complex, at least composed of DNAJB12, DNAJB14, HSPA8/Hsc70 and SGTA; interaction with DNAJB14 and HSPA8/Hsc70 is direct. As to quaternary structure, (Microbial infection) Interacts with NS1 from parvovirus H-1. Ubiquitously expressed.

The protein localises to the cytoplasm. The protein resides in the nucleus. Functionally, co-chaperone that binds misfolded and hydrophobic patches-containing client proteins in the cytosol. Mediates their targeting to the endoplasmic reticulum but also regulates their sorting to the proteasome when targeting fails. Functions in tail-anchored/type II transmembrane proteins membrane insertion constituting with ASNA1 and the BAG6 complex a targeting module. Functions upstream of the BAG6 complex and ASNA1, binding more rapidly the transmembrane domain of newly synthesized proteins. It is also involved in the regulation of the endoplasmic reticulum-associated misfolded protein catabolic process via its interaction with BAG6: collaborates with the BAG6 complex to maintain hydrophobic substrates in non-ubiquitinated states. Competes with RNF126 for interaction with BAG6, preventing the ubiquitination of client proteins associated with the BAG6 complex. Binds directly to HSC70 and HSP70 and regulates their ATPase activity. This is Small glutamine-rich tetratricopeptide repeat-containing protein alpha (Sgta) from Rattus norvegicus (Rat).